A 168-amino-acid polypeptide reads, in one-letter code: Phosphopantetheine adenylyltransferase (168 aa).

Thr-14 contributes to the substrate binding site. ATP-binding positions include 14 to 15 (TF) and His-22. The substrate site is built by Lys-46, Leu-78, and Arg-92. Residues 93 to 95 (GLR), Glu-103, and 128 to 134 (YSFISSS) contribute to the ATP site.

It belongs to the bacterial CoaD family. In terms of assembly, homohexamer. Mg(2+) is required as a cofactor.

The protein resides in the cytoplasm. The catalysed reaction is (R)-4'-phosphopantetheine + ATP + H(+) = 3'-dephospho-CoA + diphosphate. It participates in cofactor biosynthesis; coenzyme A biosynthesis; CoA from (R)-pantothenate: step 4/5. Functionally, reversibly transfers an adenylyl group from ATP to 4'-phosphopantetheine, yielding dephospho-CoA (dPCoA) and pyrophosphate. This chain is Phosphopantetheine adenylyltransferase, found in Xanthomonas oryzae pv. oryzae (strain MAFF 311018).